The primary structure comprises 327 residues: DNA-directed RNA polymerase subunit alpha (327 aa).

Positions 1-231 (MIYQMQMPAK…DHVLLFADFS (231 aa)) are alpha N-terminal domain (alpha-NTD). Residues 247 to 327 (DEFETMRRLL…GMDITRYQMK (81 aa)) form an alpha C-terminal domain (alpha-CTD) region.

Belongs to the RNA polymerase alpha chain family. Homodimer. The RNAP catalytic core consists of 2 alpha, 1 beta, 1 beta' and 1 omega subunit. When a sigma factor is associated with the core the holoenzyme is formed, which can initiate transcription.

It catalyses the reaction RNA(n) + a ribonucleoside 5'-triphosphate = RNA(n+1) + diphosphate. Functionally, DNA-dependent RNA polymerase catalyzes the transcription of DNA into RNA using the four ribonucleoside triphosphates as substrates. The polypeptide is DNA-directed RNA polymerase subunit alpha (Chlorobium chlorochromatii (strain CaD3)).